A 1027-amino-acid chain; its full sequence is INO80 complex subunit D (1027 aa).

Residue K87 forms a Glycyl lysine isopeptide (Lys-Gly) (interchain with G-Cter in SUMO2) linkage. S132 carries the post-translational modification Phosphoserine. Disordered stretches follow at residues 193–278 (HFSP…VDPP), 519–574 (RGDN…LSMP), 813–850 (RQQY…HTTS), 914–969 (LSTS…TSPK), and 982–1027 (QLSS…PSPN). Residues 201–216 (SQQQPPQQHSHLSPLS) are compositionally biased toward low complexity. Residues 229-257 (VCKSPQPQNTSLPMQGVAPTTHTIAQARQ) show a composition bias toward polar residues. Residues 525–559 (KVQHQQQRKPRKKTKPPALTKKHKKKRRRGPRRPQ) show a composition bias toward basic residues. The segment covering 914–932 (LSTSLSTPPTTSNSETTQP) has biased composition (low complexity). Polar residues predominate over residues 937-954 (VTPSSSSVLPGLPQTSFS). Low complexity predominate over residues 1001-1027 (APPTGFTVTGATATSTNNASSPFPSPN).

This sequence belongs to the INO80D family. In terms of assembly, component of the chromatin remodeling INO80 complex; specifically part of a complex module associated with the N-terminus of INO80.

Its subcellular location is the nucleus. Putative regulatory component of the chromatin remodeling INO80 complex which is involved in transcriptional regulation, DNA replication and probably DNA repair. The sequence is that of INO80 complex subunit D from Homo sapiens (Human).